Consider the following 89-residue polypeptide: uncharacterized protein (89 aa).

2 consecutive transmembrane segments (helical) span residues 11-31 and 63-83; these read IFGAVILVSMIGALVAEPIAL and AAISAALGPAGLASGVFTVVF.

The protein resides in the cell membrane. This is an uncharacterized protein from Methanocaldococcus jannaschii (strain ATCC 43067 / DSM 2661 / JAL-1 / JCM 10045 / NBRC 100440) (Methanococcus jannaschii).